The following is a 553-amino-acid chain: Solute carrier family 45 member 3 (553 aa).

11 helical membrane-spanning segments follow: residues 19–39, 52–72, 88–108, 120–140, 161–181, 198–218, 275–295, 323–343, 353–373, 382–402, and 522–542; these read LLVNLLTFGLEVCLAAGITYV, FMTMVLGIGPVLGLVCVPLLG, FIWALSLGILLSLFLIPRAGW, LELALLILGVGLLDFCGQVCF, YSVYAFMISLGGCLGYLLPAI, CLFGLLTLIFLTCVAATLLVA, FVAELCSWMALMTFTLFYTDF, MGSLGLFLQCAISLVFSLVMD, AVYLASVAAFPVAAGATCLSH, AALTGFTFSALQILPYTLASL, and AYMVSAAGLGLVAIYFATQVV.

Belongs to the glycoside-pentoside-hexuronide (GPH) cation symporter transporter (TC 2.A.2) family. In terms of tissue distribution, prostate specific. Expressed in all prostatic glandular cells. Expressed both in normal and cancerous prostates.

The protein resides in the membrane. It carries out the reaction sucrose(out) + H(+)(out) = sucrose(in) + H(+)(in). Functionally, proton-associated sucrose transporter. May be able to transport also glucose and fructose. The sequence is that of Solute carrier family 45 member 3 from Homo sapiens (Human).